The chain runs to 319 residues: Phosphoenolpyruvate transferase (319 aa).

Asp-50 serves as a coordination point for 7,8-didemethyl-8-hydroxy-5-deazariboflavin.

Belongs to the CofD family. As to quaternary structure, homodimer. Requires Mg(2+) as cofactor.

It catalyses the reaction enolpyruvoyl-2-diphospho-5'-guanosine + 7,8-didemethyl-8-hydroxy-5-deazariboflavin = dehydro coenzyme F420-0 + GMP + H(+). It participates in cofactor biosynthesis; coenzyme F420 biosynthesis. In terms of biological role, catalyzes the transfer of the phosphoenolpyruvate moiety from enoylpyruvoyl-2-diphospho-5'-guanosine (EPPG) to 7,8-didemethyl-8-hydroxy-5-deazariboflavin (FO) with the formation of dehydro coenzyme F420-0 and GMP. This is Phosphoenolpyruvate transferase from Streptomyces coelicolor (strain ATCC BAA-471 / A3(2) / M145).